The chain runs to 278 residues: ATPase SWSAP1 (278 aa).

Residues 237-278 (SPEKKDSSAGSQSLTLGCDNLPGPGSPLDGILTSETGADSKT) form a disordered region. Positions 269-278 (TSETGADSKT) are enriched in polar residues.

In terms of assembly, interacts with ZSWIM7; they form a functional complex involved in homologous recombination repair and stabilize each other. Interacts with RAD51, RAD51B, RAD51C, RAD51D and XRCC3; involved in homologous recombination repair.

Its subcellular location is the nucleus. ATPase which is preferentially stimulated by single-stranded DNA and is involved in homologous recombination repair (HRR). Has a DNA-binding activity which is independent of its ATPase activity. The chain is ATPase SWSAP1 (Swsap1) from Mus musculus (Mouse).